Here is a 169-residue protein sequence, read N- to C-terminus: Putative phosphoesterase SAR0985 (169 aa).

The active-site Proton donor is the H34. 2 short sequence motifs (HXTX) span residues 34–37 (HVTI) and 115–118 (HFTI). H115 acts as the Proton acceptor in catalysis.

This sequence belongs to the 2H phosphoesterase superfamily. YjcG family.

This is Putative phosphoesterase SAR0985 from Staphylococcus aureus (strain MRSA252).